The sequence spans 171 residues: Co-chaperone protein HscB (171 aa).

In terms of domain architecture, J spans 2-74 (DYFTLFGLPA…LTRAEYLLSL (73 aa)).

The protein belongs to the HscB family. Interacts with HscA and stimulates its ATPase activity. Interacts with IscU.

Co-chaperone involved in the maturation of iron-sulfur cluster-containing proteins. Seems to help targeting proteins to be folded toward HscA. The protein is Co-chaperone protein HscB of Salmonella schwarzengrund (strain CVM19633).